A 238-amino-acid chain; its full sequence is 3-dehydroquinate dehydratase (238 aa).

Residues 35–37 (ELR) and Arg70 contribute to the 3-dehydroquinate site. The active-site Proton donor/acceptor is His133. Lys160 acts as the Schiff-base intermediate with substrate in catalysis. 2 residues coordinate 3-dehydroquinate: Arg202 and Gln225.

This sequence belongs to the type-I 3-dehydroquinase family. As to quaternary structure, homodimer.

It carries out the reaction 3-dehydroquinate = 3-dehydroshikimate + H2O. It participates in metabolic intermediate biosynthesis; chorismate biosynthesis; chorismate from D-erythrose 4-phosphate and phosphoenolpyruvate: step 3/7. In terms of biological role, involved in the third step of the chorismate pathway, which leads to the biosynthesis of aromatic amino acids. Catalyzes the cis-dehydration of 3-dehydroquinate (DHQ) and introduces the first double bond of the aromatic ring to yield 3-dehydroshikimate. In Staphylococcus aureus (strain MRSA252), this protein is 3-dehydroquinate dehydratase.